A 486-amino-acid chain; its full sequence is UDP-N-acetylmuramate--L-alanine ligase (486 aa).

Gly126–Thr132 contributes to the ATP binding site.

Belongs to the MurCDEF family.

Its subcellular location is the cytoplasm. The enzyme catalyses UDP-N-acetyl-alpha-D-muramate + L-alanine + ATP = UDP-N-acetyl-alpha-D-muramoyl-L-alanine + ADP + phosphate + H(+). Its pathway is cell wall biogenesis; peptidoglycan biosynthesis. In terms of biological role, cell wall formation. The protein is UDP-N-acetylmuramate--L-alanine ligase of Pectobacterium atrosepticum (strain SCRI 1043 / ATCC BAA-672) (Erwinia carotovora subsp. atroseptica).